We begin with the raw amino-acid sequence, 312 residues long: Bifunctional pinoresinol-lariciresinol reductase 1 (312 aa).

NADP(+)-binding positions include 10–16, R35, and K44; that span reads GGTGYIG. Residue K136 is the Proton acceptor of the active site. R140 provides a ligand contact to NADP(+). H268 provides a ligand contact to substrate.

It belongs to the NmrA-type oxidoreductase family. Isoflavone reductase subfamily. As to quaternary structure, dimer. Expressed in seeds and roots, but not in stems. Detected in leaves.

The catalysed reaction is (-)-lariciresinol + NADP(+) = (-)-pinoresinol + NADPH + H(+). It catalyses the reaction (+)-secoisolariciresinol + NADP(+) = (-)-lariciresinol + NADPH + H(+). Functionally, reductase involved in lignan biosynthesis. Catalyzes the enantioselective conversion of (-)-pinoresinol into (-)-lariciresinol and of (-)-lariciresinol into (+)-secoisolariciresinol. Abstracts the 4R-hydride from the NADPH cofactor during catalysis. This Linum usitatissimum (Flax) protein is Bifunctional pinoresinol-lariciresinol reductase 1 (PLR_Lu1).